Here is a 490-residue protein sequence, read N- to C-terminus: Subtilisin-like protease 8 (490 aa).

An N-terminal signal peptide occupies residues 1–26 (MKGLLSLSVLPVLAYASPMIVDSIHQ). The propeptide occupies 27-134 (DAAPILSSTN…YIERDSEVRA (108 aa)). In terms of domain architecture, Inhibitor I9 spans 43-133 (SYIVVFKKGV…EYIERDSEVR (91 aa)). In terms of domain architecture, Peptidase S8 spans 144-450 (PWGLARISHR…GGSDNYKEIV (307 aa)). Residues Asp-180 and His-212 each act as charge relay system in the active site. N-linked (GlcNAc...) asparagine glycosylation is present at Asn-282. The Charge relay system role is filled by Ser-378. N-linked (GlcNAc...) asparagine glycosylation occurs at Asn-455.

The protein belongs to the peptidase S8 family.

It is found in the secreted. Secreted subtilisin-like serine protease with keratinolytic activity that contributes to pathogenicity. This chain is Subtilisin-like protease 8 (SUB8), found in Arthroderma otae (strain ATCC MYA-4605 / CBS 113480) (Microsporum canis).